A 367-amino-acid polypeptide reads, in one-letter code: Avirulence protein ATR5 (367 aa).

An N-terminal signal peptide occupies residues 1-16; that stretch reads MRLISPALVVSTAIQA. N-linked (GlcNAc...) asparagine glycosylation occurs at Asn-20. The disordered stretch occupies residues 33–65; the sequence is NPLASAHPPDVGYDGVPAGRVRNPDDPTTEERT. Residues 54 to 65 are compositionally biased toward basic and acidic residues; it reads RNPDDPTTEERT. A dEER motif is present at residues 61–64; the sequence is TEER.

The protein belongs to the RxLR effector family.

The protein localises to the secreted. It localises to the host cell. In terms of biological role, secreted effector that acts as an elicitor of hypersensitive response (HR) specifically on plants carrying defense protein RPP5. The chain is Avirulence protein ATR5 from Hyaloperonospora arabidopsidis (strain Emoy2) (Downy mildew agent).